A 134-amino-acid polypeptide reads, in one-letter code: ATP synthase epsilon chain (134 aa).

Belongs to the ATPase epsilon chain family. As to quaternary structure, F-type ATPases have 2 components, CF(1) - the catalytic core - and CF(0) - the membrane proton channel. CF(1) has five subunits: alpha(3), beta(3), gamma(1), delta(1), epsilon(1). CF(0) has three main subunits: a, b and c.

The protein localises to the cell membrane. Produces ATP from ADP in the presence of a proton gradient across the membrane. The sequence is that of ATP synthase epsilon chain from Listeria monocytogenes serotype 4b (strain F2365).